The sequence spans 201 residues: Aminoglycoside N(6')-acetyltransferase type 1 (201 aa).

Residues 25–192 enclose the N-acetyltransferase domain; it reads VTLRLMTEHD…PAVYMVQTRQ (168 aa). Substrate-binding residues include W51 and D154. N159 contributes to the acetyl-CoA binding site.

In terms of assembly, homodimer.

It carries out the reaction kanamycin B + acetyl-CoA = N(6')-acetylkanamycin B + CoA + H(+). In terms of biological role, catalyzes the transfer of an acetyl group from acetyl-CoA to the 6'-amino group of aminoglycoside molecules conferring resistance to antibiotics containing the purpurosamine ring including amikacin. The chain is Aminoglycoside N(6')-acetyltransferase type 1 (aacA4) from Klebsiella pneumoniae.